Reading from the N-terminus, the 545-residue chain is Sulfite oxidase, mitochondrial (545 aa).

Residues 1–79 (MLLLHRAVVL…YQDHRCRAAQ (79 aa)) constitute a mitochondrion transit peptide. Residues 82-161 (TRIYTKEEVS…LAQYKVGELN (80 aa)) enclose the Cytochrome b5 heme-binding domain. His118 is a heme b binding site. At Ser123 the chain carries Phosphoserine. 3 residues coordinate heme b: His143, Gln145, and His147. The interval 165–174 (KVAPTVETSD) is hinge. The interval 175–401 (PYADDPVRHP…YSHWQRRDYK (227 aa)) is moco domain. Mo-molybdopterin-binding positions include 215–219 (FTRNH), Cys264, Asp322, His361, Arg366, and 377–379 (HVK). The interval 402-538 (GFSPSVDWDT…RGVLSNAWHR (137 aa)) is homodimerization.

As to quaternary structure, homodimer. Heme b serves as cofactor. It depends on Mo-molybdopterin as a cofactor.

Its subcellular location is the mitochondrion intermembrane space. The catalysed reaction is sulfite + O2 + H2O = sulfate + H2O2. The protein operates within energy metabolism; sulfur metabolism. Its function is as follows. Catalyzes the oxidation of sulfite to sulfate, the terminal reaction in the oxidative degradation of sulfur-containing amino acids. The polypeptide is Sulfite oxidase, mitochondrial (SUOX) (Macaca fascicularis (Crab-eating macaque)).